A 1052-amino-acid polypeptide reads, in one-letter code: Mediator of RNA polymerase II transcription subunit 5 (1052 aa).

The tract at residues 949–982 (GGDDEQREQHQQQQPDADQSNQGVVAPTGNTPGN) is disordered. The segment covering 959–970 (QQQQPDADQSNQ) has biased composition (low complexity).

This sequence belongs to the Mediator complex subunit 5 family. In terms of assembly, component of the Mediator complex.

The protein localises to the nucleus. Functionally, component of the Mediator complex, a coactivator involved in the regulated transcription of nearly all RNA polymerase II-dependent genes. Mediator functions as a bridge to convey information from gene-specific regulatory proteins to the basal RNA polymerase II transcription machinery. Mediator is recruited to promoters by direct interactions with regulatory proteins and serves as a scaffold for the assembly of a functional preinitiation complex with RNA polymerase II and the general transcription factors. In Coccidioides immitis (strain RS) (Valley fever fungus), this protein is Mediator of RNA polymerase II transcription subunit 5 (NUT1).